The chain runs to 389 residues: Probable tRNA sulfurtransferase (389 aa).

The region spanning 57 to 165 (DEALDRLSKI…EDETYIYHRV (109 aa)) is the THUMP domain. ATP is bound by residues 183–184 (LL), lysine 267, glycine 289, and glutamine 298.

This sequence belongs to the ThiI family.

It localises to the cytoplasm. The enzyme catalyses [ThiI sulfur-carrier protein]-S-sulfanyl-L-cysteine + a uridine in tRNA + 2 reduced [2Fe-2S]-[ferredoxin] + ATP + H(+) = [ThiI sulfur-carrier protein]-L-cysteine + a 4-thiouridine in tRNA + 2 oxidized [2Fe-2S]-[ferredoxin] + AMP + diphosphate. It carries out the reaction [ThiS sulfur-carrier protein]-C-terminal Gly-Gly-AMP + S-sulfanyl-L-cysteinyl-[cysteine desulfurase] + AH2 = [ThiS sulfur-carrier protein]-C-terminal-Gly-aminoethanethioate + L-cysteinyl-[cysteine desulfurase] + A + AMP + 2 H(+). The protein operates within cofactor biosynthesis; thiamine diphosphate biosynthesis. Functionally, catalyzes the ATP-dependent transfer of a sulfur to tRNA to produce 4-thiouridine in position 8 of tRNAs, which functions as a near-UV photosensor. Also catalyzes the transfer of sulfur to the sulfur carrier protein ThiS, forming ThiS-thiocarboxylate. This is a step in the synthesis of thiazole, in the thiamine biosynthesis pathway. The sulfur is donated as persulfide by IscS. In Methanothermobacter thermautotrophicus (strain ATCC 29096 / DSM 1053 / JCM 10044 / NBRC 100330 / Delta H) (Methanobacterium thermoautotrophicum), this protein is Probable tRNA sulfurtransferase.